A 475-amino-acid chain; its full sequence is Legumain (475 aa).

Residues Met1 to Ala15 form the signal peptide. The propeptide occupies Arg16–Asp35. His158 is an active-site residue. Cys200 acts as the Nucleophile in catalysis. Cys233 and Cys247 are oxidised to a cystine. Residue Asn300 is glycosylated (N-linked (GlcNAc...) asparagine). Cystine bridges form between Cys411–Cys441 and Cys423–Cys458.

This sequence belongs to the peptidase C13 family. Homodimer.

The catalysed reaction is Hydrolysis of proteins and small molecule substrates at -Asn-|-Xaa- bonds.. Repressed by various protease inhibitors including p-chloromercuribenzene sulfonic acid (PCMBS), N-ethylmaleimide, kininogen, elastatinal, cystatin EW and leupeptin. Asparaginyl endopeptidase able to cleave almost all peptide bonds on the carboxyl side of Asn residues, except at the NH2 terminus or second position or with N-glycosylated Asn. Responsible for the maturation (circular permutation) of concanavalin A from its precursor, by performing both cleavage and cleavage-coupled transpeptidation to form conA. This chain is Legumain, found in Canavalia ensiformis (Jack bean).